The following is a 740-amino-acid chain: Elongation factor 2 (740 aa).

Residues 18–263 form the tr-type G domain; sequence EQVRNIGIIA…MVVRWVPNPR (246 aa). GTP contacts are provided by residues 27–34, 93–97, and 147–150; these read AHVDHGKT, DTPGH, and NKVD. Position 606 is a diphthamide (His-606).

This sequence belongs to the TRAFAC class translation factor GTPase superfamily. Classic translation factor GTPase family. EF-G/EF-2 subfamily.

Its subcellular location is the cytoplasm. In terms of biological role, catalyzes the GTP-dependent ribosomal translocation step during translation elongation. During this step, the ribosome changes from the pre-translocational (PRE) to the post-translocational (POST) state as the newly formed A-site-bound peptidyl-tRNA and P-site-bound deacylated tRNA move to the P and E sites, respectively. Catalyzes the coordinated movement of the two tRNA molecules, the mRNA and conformational changes in the ribosome. This chain is Elongation factor 2, found in Ignicoccus hospitalis (strain KIN4/I / DSM 18386 / JCM 14125).